The primary structure comprises 48 residues: MTNKNDGKDMRKNAPKGDNPGQPEPLDGSKKVKNRNHTRQKHNTSHDM.

Positions 1 to 12 (MTNKNDGKDMRK) are enriched in basic and acidic residues. A disordered region spans residues 1–48 (MTNKNDGKDMRKNAPKGDNPGQPEPLDGSKKVKNRNHTRQKHNTSHDM). A compositionally biased stretch (basic residues) spans 31-48 (KVKNRNHTRQKHNTSHDM).

Belongs to the SspP family.

It localises to the spore core. In Geobacillus kaustophilus (strain HTA426), this protein is Small, acid-soluble spore protein P.